The sequence spans 184 residues: Probable chemoreceptor glutamine deamidase CheD (184 aa).

It belongs to the CheD family.

It carries out the reaction L-glutaminyl-[protein] + H2O = L-glutamyl-[protein] + NH4(+). Functionally, probably deamidates glutamine residues to glutamate on methyl-accepting chemotaxis receptors (MCPs), playing an important role in chemotaxis. The polypeptide is Probable chemoreceptor glutamine deamidase CheD (Rhizobium johnstonii (strain DSM 114642 / LMG 32736 / 3841) (Rhizobium leguminosarum bv. viciae)).